The chain runs to 540 residues: GMP synthase [glutamine-hydrolyzing] (540 aa).

Residues 29–222 (KILIVDFGSQ…VRKVAGLTGD (194 aa)) enclose the Glutamine amidotransferase type-1 domain. The Nucleophile role is filled by cysteine 106. Active-site residues include histidine 196 and glutamate 198. The 193-residue stretch at 223-415 (WTMRAFREEA…LGLPEIFVGR (193 aa)) folds into the GMPS ATP-PPase domain. An ATP-binding site is contributed by 250-256 (SGGVDSA).

In terms of assembly, homodimer.

It carries out the reaction XMP + L-glutamine + ATP + H2O = GMP + L-glutamate + AMP + diphosphate + 2 H(+). Its pathway is purine metabolism; GMP biosynthesis; GMP from XMP (L-Gln route): step 1/1. In terms of biological role, catalyzes the synthesis of GMP from XMP. The polypeptide is GMP synthase [glutamine-hydrolyzing] (Rhodopseudomonas palustris (strain HaA2)).